The following is a 394-amino-acid chain: Mitogen-activated protein kinase homolog D5 (394 aa).

The Protein kinase domain maps to 62–347; that stretch reads RPPIMPIGKG…VENALAHPYL (286 aa). ATP contacts are provided by residues 68–76 and lysine 91; that span reads IGKGAYGIV. Aspartate 188 functions as the Proton acceptor in the catalytic mechanism. Phosphothreonine is present on threonine 220. A TXY motif is present at residues 220–222; the sequence is TEY. A Phosphotyrosine modification is found at tyrosine 222.

The protein belongs to the protein kinase superfamily. CMGC Ser/Thr protein kinase family. MAP kinase subfamily. Mg(2+) serves as cofactor. Dually phosphorylated on Thr-220 and Tyr-222, which activates the enzyme. In terms of tissue distribution, leaves, roots, root apices, and dormant and growing axillary buds.

It carries out the reaction L-seryl-[protein] + ATP = O-phospho-L-seryl-[protein] + ADP + H(+). The enzyme catalyses L-threonyl-[protein] + ATP = O-phospho-L-threonyl-[protein] + ADP + H(+). Its activity is regulated as follows. Activated by tyrosine and threonine phosphorylation. The protein is Mitogen-activated protein kinase homolog D5 of Pisum sativum (Garden pea).